The following is a 215-amino-acid chain: HTH-type transcriptional repressor FabR (215 aa).

Residues 10–70 enclose the HTH tetR-type domain; sequence KTRRSLVEAA…TMVDESGLML (61 aa). A DNA-binding region (H-T-H motif) is located at residues 33-52; that stretch reads SLREVAREAGIAPTSFYRHF.

As to quaternary structure, homodimer.

It is found in the cytoplasm. Represses the transcription of fabB, involved in unsaturated fatty acid (UFA) biosynthesis. By controlling UFA production, FabR directly influences the physical properties of the membrane bilayer. The protein is HTH-type transcriptional repressor FabR of Escherichia coli O9:H4 (strain HS).